The following is a 56-amino-acid chain: Small ribosomal subunit protein uS14 (56 aa).

Positions 21, 24, 39, and 42 each coordinate Zn(2+).

It belongs to the universal ribosomal protein uS14 family. Requires Zn(2+) as cofactor.

The chain is Small ribosomal subunit protein uS14 (RPS29) from Eremothecium gossypii (strain ATCC 10895 / CBS 109.51 / FGSC 9923 / NRRL Y-1056) (Yeast).